The following is a 167-amino-acid chain: Small ribosomal subunit protein uS5 (167 aa).

Positions 12 to 75 (LQEKLVAVNR…EKARRNIVSV (64 aa)) constitute an S5 DRBM domain.

It belongs to the universal ribosomal protein uS5 family. In terms of assembly, part of the 30S ribosomal subunit. Contacts proteins S4 and S8.

In terms of biological role, with S4 and S12 plays an important role in translational accuracy. Functionally, located at the back of the 30S subunit body where it stabilizes the conformation of the head with respect to the body. The sequence is that of Small ribosomal subunit protein uS5 from Shewanella loihica (strain ATCC BAA-1088 / PV-4).